A 591-amino-acid chain; its full sequence is Aspartate--tRNA(Asp/Asn) ligase (591 aa).

Glutamate 174 contacts L-aspartate. Residues 198–201 are aspartate; that stretch reads QLFK. Arginine 220 is an L-aspartate binding site. Residues 220–222 and glutamine 229 contribute to the ATP site; that span reads RDE. Residue histidine 450 coordinates L-aspartate. Residue glutamate 483 participates in ATP binding. Position 490 (arginine 490) interacts with L-aspartate. An ATP-binding site is contributed by 535-538; that stretch reads GLDR.

The protein belongs to the class-II aminoacyl-tRNA synthetase family. Type 1 subfamily. Homodimer.

The protein localises to the cytoplasm. The enzyme catalyses tRNA(Asx) + L-aspartate + ATP = L-aspartyl-tRNA(Asx) + AMP + diphosphate. Aspartyl-tRNA synthetase with relaxed tRNA specificity since it is able to aspartylate not only its cognate tRNA(Asp) but also tRNA(Asn). Reaction proceeds in two steps: L-aspartate is first activated by ATP to form Asp-AMP and then transferred to the acceptor end of tRNA(Asp/Asn). The sequence is that of Aspartate--tRNA(Asp/Asn) ligase from Ectopseudomonas mendocina (strain ymp) (Pseudomonas mendocina).